Consider the following 292-residue polypeptide: 4-hydroxy-tetrahydrodipicolinate synthase (292 aa).

Thr-45 contacts pyruvate. Tyr-133 (proton donor/acceptor) is an active-site residue. The active-site Schiff-base intermediate with substrate is the Lys-161. Ile-203 lines the pyruvate pocket.

The protein belongs to the DapA family. In terms of assembly, homotetramer; dimer of dimers.

The protein resides in the cytoplasm. The catalysed reaction is L-aspartate 4-semialdehyde + pyruvate = (2S,4S)-4-hydroxy-2,3,4,5-tetrahydrodipicolinate + H2O + H(+). Its pathway is amino-acid biosynthesis; L-lysine biosynthesis via DAP pathway; (S)-tetrahydrodipicolinate from L-aspartate: step 3/4. Functionally, catalyzes the condensation of (S)-aspartate-beta-semialdehyde [(S)-ASA] and pyruvate to 4-hydroxy-tetrahydrodipicolinate (HTPA). This is 4-hydroxy-tetrahydrodipicolinate synthase from Nitrosomonas europaea (strain ATCC 19718 / CIP 103999 / KCTC 2705 / NBRC 14298).